We begin with the raw amino-acid sequence, 264 residues long: tRNA pseudouridine synthase A (264 aa).

D51 acts as the Nucleophile in catalysis. Y109 contributes to the substrate binding site.

The protein belongs to the tRNA pseudouridine synthase TruA family. As to quaternary structure, homodimer.

It carries out the reaction uridine(38/39/40) in tRNA = pseudouridine(38/39/40) in tRNA. In terms of biological role, formation of pseudouridine at positions 38, 39 and 40 in the anticodon stem and loop of transfer RNAs. The chain is tRNA pseudouridine synthase A from Yersinia pseudotuberculosis serotype O:1b (strain IP 31758).